The chain runs to 413 residues: Tyrosine--tRNA ligase (413 aa).

The 'HIGH' region motif lies at 60-69; sequence PTAPDIHIGH. The 'KMSKS' region motif lies at 244-248; it reads KMSKS. Lys247 is a binding site for ATP. Residues 352 to 412 enclose the S4 RNA-binding domain; that stretch reads LGIAQLLKQA…GKRRFARVTL (61 aa).

The protein belongs to the class-I aminoacyl-tRNA synthetase family. TyrS type 2 subfamily. In terms of assembly, homodimer.

It localises to the cytoplasm. It catalyses the reaction tRNA(Tyr) + L-tyrosine + ATP = L-tyrosyl-tRNA(Tyr) + AMP + diphosphate + H(+). Its function is as follows. Catalyzes the attachment of tyrosine to tRNA(Tyr) in a two-step reaction: tyrosine is first activated by ATP to form Tyr-AMP and then transferred to the acceptor end of tRNA(Tyr). This chain is Tyrosine--tRNA ligase, found in Cupriavidus pinatubonensis (strain JMP 134 / LMG 1197) (Cupriavidus necator (strain JMP 134)).